The chain runs to 389 residues: MSLSLNEYLRYGRQLIVPEFGLQGQISLKNSRVLVVGAGGLGCPALQYLVGAGFGTVGIVDHDTVDISNLHRQILHTSETVEMLKCESAKLQLAKLNPLVQINTHPVALSPDNSFGIFEQYDIILDCTDTPATRYLINDTAVLLGLTVISGSGLKTEGQLSILNFNNTGPCYRCFYPTPPPPSSVTACSDGGVLGPVIGIMGVMMALEAIKVVSGYYLREDVEFQPFLSLYSGYGPLQSLRTFKMRRRSPKCRVCNAGTREITRHVIETELDYAVWCGKMDYNVLEKDERVSVEQLSAQRAPYLVDVRAKEQYSIVHLPNSINIPLNALKHMDTLDVPKETMIYVICRFGNDSQLAVKHLKSIGYENCVDVIGGLTQWSRQIDPNFPIY.

ATP is bound by residues glycine 40, aspartate 61, serine 68–arginine 72, lysine 85, and aspartate 129–threonine 130. Zn(2+) contacts are provided by cysteine 171 and cysteine 174. Catalysis depends on cysteine 188, which acts as the Glycyl thioester intermediate; for adenylyltransferase activity. 2 residues coordinate Zn(2+): cysteine 252 and cysteine 255. The 90-residue stretch at alanine 298–proline 387 folds into the Rhodanese domain. The Cysteine persulfide intermediate role is filled by cysteine 347.

In the N-terminal section; belongs to the HesA/MoeB/ThiF family. UBA4 subfamily. Zn(2+) is required as a cofactor.

The protein localises to the cytoplasm. It is found in the cytosol. It carries out the reaction [molybdopterin-synthase sulfur-carrier protein]-C-terminal Gly-Gly + ATP + H(+) = [molybdopterin-synthase sulfur-carrier protein]-C-terminal Gly-Gly-AMP + diphosphate. The enzyme catalyses [molybdopterin-synthase sulfur-carrier protein]-C-terminal Gly-Gly-AMP + S-sulfanyl-L-cysteinyl-[cysteine desulfurase] + AH2 = [molybdopterin-synthase sulfur-carrier protein]-C-terminal-Gly-aminoethanethioate + L-cysteinyl-[cysteine desulfurase] + A + AMP + 2 H(+). Its pathway is tRNA modification; 5-methoxycarbonylmethyl-2-thiouridine-tRNA biosynthesis. The protein operates within cofactor biosynthesis; molybdopterin biosynthesis. Its function is as follows. Plays a central role in 2-thiolation of mcm(5)S(2)U at tRNA wobble positions of cytosolic tRNA(Lys), tRNA(Glu) and tRNA(Gln). Also essential during biosynthesis of the molybdenum cofactor. Acts by mediating the C-terminal thiocarboxylation of sulfur carriers URM1 and CNX5/MOCS2A. Its N-terminus first activates urm1 and mocs2a as acyl-adenylates (-COAMP), then the persulfide sulfur on the catalytic cysteine is transferred to URM1 and CNX5/MOCS2A to form thiocarboxylation (-COSH) of their C-terminus. The reaction probably involves hydrogen sulfide that is generated from the persulfide intermediate and that acts as a nucleophile towards URM1 and CNX5/MOCS2A. Subsequently, a transient disulfide bond is formed. Does not use thiosulfate as sulfur donor; NFS1 probably acting as a sulfur donor for thiocarboxylation reactions. Required for growth on nitrate as a sole nitrogen source. The chain is Adenylyltransferase and sulfurtransferase uba4 from Ogataea parapolymorpha (strain ATCC 26012 / BCRC 20466 / JCM 22074 / NRRL Y-7560 / DL-1) (Yeast).